Reading from the N-terminus, the 526-residue chain is Dolichyl pyrophosphate Glc1Man9GlcNAc2 alpha-1,3-glucosyltransferase (526 aa).

11 helical membrane-spanning segments follow: residues Ala9–Ile29, Phe108–Ile128, Phe143–Phe163, Gly188–Ala208, Val238–Ala258, Pro334–Phe354, Gly361–Val380, Ala400–Phe422, Leu427–Phe449, Thr461–Thr481, and Tyr487–Trp507.

Belongs to the ALG6/ALG8 glucosyltransferase family.

It localises to the endoplasmic reticulum membrane. It carries out the reaction an alpha-D-Glc-(1-&gt;3)-alpha-D-Man-(1-&gt;2)-alpha-D-Man-(1-&gt;2)-alpha-D-Man-(1-&gt;3)-[alpha-D-Man-(1-&gt;2)-alpha-D-Man-(1-&gt;3)-[alpha-D-Man-(1-&gt;2)-alpha-D-Man-(1-&gt;6)]-alpha-D-Man-(1-&gt;6)]-beta-D-Man-(1-&gt;4)-beta-D-GlcNAc-(1-&gt;4)-alpha-D-GlcNAc-diphospho-di-trans,poly-cis-dolichol + a di-trans,poly-cis-dolichyl beta-D-glucosyl phosphate = an alpha-D-Glc-(1-&gt;3)-alpha-D-Glc-(1-&gt;3)-alpha-D-Man-(1-&gt;2)-alpha-D-Man-(1-&gt;2)-alpha-D-Man-(1-&gt;3)-[alpha-D-Man-(1-&gt;2)-alpha-D-Man-(1-&gt;3)-[alpha-D-Man-(1-&gt;2)-alpha-D-Man-(1-&gt;6)]-alpha-D-Man-(1-&gt;6)]-beta-D-Man-(1-&gt;4)-beta-D-GlcNAc-(1-&gt;4)-alpha-D-GlcNAc-diphospho-di-trans,poly-cis-dolichol + a di-trans,poly-cis-dolichyl phosphate + H(+). Its pathway is protein modification; protein glycosylation. Its function is as follows. Dolichyl pyrophosphate Glc1Man9GlcNAc2 alpha-1,3-glucosyltransferase that operates in the biosynthetic pathway of dolichol-linked oligosaccharides, the glycan precursors employed in protein asparagine (N)-glycosylation. The assembly of dolichol-linked oligosaccharides begins on the cytosolic side of the endoplasmic reticulum membrane and finishes in its lumen. The sequential addition of sugars to dolichol pyrophosphate produces dolichol-linked oligosaccharides containing fourteen sugars, including two GlcNAcs, nine mannoses and three glucoses. Once assembled, the oligosaccharide is transferred from the lipid to nascent proteins by oligosaccharyltransferases. In the lumen of the endoplasmic reticulum, adds the second glucose residue from dolichyl phosphate glucose (Dol-P-Glc) onto the lipid-linked oligosaccharide intermediate Glc(1)Man(9)GlcNAc(2)-PP-Dol to produce Glc(2)Man(9)GlcNAc(2)-PP-Dol. Glc(2)Man(9)GlcNAc(2)-PP-Dol is a substrate for ALG10, the following enzyme in the biosynthetic pathway. Required for PKD1/Polycystin-1 maturation and localization to the plasma membrane of the primary cilia. The chain is Dolichyl pyrophosphate Glc1Man9GlcNAc2 alpha-1,3-glucosyltransferase from Mus musculus (Mouse).